A 676-amino-acid chain; its full sequence is MSFFDKIFKKFHMGVLYFAVILIGATFIYCYFTKHEKKDNNTFDALAQKNEIEKIQYNPIFANSAFCDIVVTTTDGRVIDFFNIPYDKVFEKKPNGKYKYNTYSVDPRPWNGYEHVFWVFRQCLTMLFFYCFFLFFADTIKQMGQEILASTSGKKGAKSRKVIINHKRFTFSDVAGADEEKEEMSELIDFLKNPRKYAAMGARIPKGVLLYGPPGTGKTLLAKAVAGEAGVPFFAASGSDFDEVYVGVGASRVRDLFKEAQLAAPCIVFIDEIEAVARKRGSNIGGSNGSEQTLNQLLVEMDGFNQKMGVIVIAATNQPEVLDSAILRPGRFDRHFNITLPNVKDREAILKLHASNKKLSEEISLEELAKQTPGFSGAQLEGTLNEAALLAARRNATFINKKDISEALDRILIGPTKKSKKYNDKEKRMVAYHEAGHAVIGIKIPFAQIVQKITIIPRGNAGGYNLMLPQEETFFSSKKALLAQITSFLGGRVAEELMFDDVSNGAYNDFKHATQIAKLMVTKYGMSDLGPVQYSGNTFQNDFSDPKGLEIDQQIQKIIANCYQQAKQIIQENQDLLDTIAKYLLEIETLNKRDIDEIVATGKIAWWEKEKEETNAPTQTTSQMSSNNETTNTDKTPLNDELEITTNLDNQESNESNPNNNEKASPEVLSTDSEQT.

Residues Met-1 to His-12 lie on the Cytoplasmic side of the membrane. Residues Met-13 to Thr-33 form a helical membrane-spanning segment. The Extracellular segment spans residues Lys-34 to His-115. The helical transmembrane segment at Val-116–Phe-136 threads the bilayer. Topologically, residues Ala-137 to Thr-676 are cytoplasmic. Position 212-219 (Gly-212–Thr-219) interacts with ATP. His-433 contributes to the Zn(2+) binding site. Residue Glu-434 is part of the active site. 2 residues coordinate Zn(2+): His-437 and Asp-509. The interval Glu-610–Thr-676 is disordered. Residues Asn-615–Thr-636 are compositionally biased toward polar residues. The segment covering Asn-650–Glu-667 has biased composition (low complexity).

In the central section; belongs to the AAA ATPase family. It in the C-terminal section; belongs to the peptidase M41 family. As to quaternary structure, homohexamer. The cofactor is Zn(2+).

It is found in the cell membrane. Functionally, acts as a processive, ATP-dependent zinc metallopeptidase for both cytoplasmic and membrane proteins. Plays a role in the quality control of integral membrane proteins. The polypeptide is ATP-dependent zinc metalloprotease FtsH (Aster yellows witches'-broom phytoplasma (strain AYWB)).